We begin with the raw amino-acid sequence, 103 residues long: Eukaryotic translation initiation factor 4E-1A-binding protein homolog (103 aa).

Residues 49–103 form a disordered region; sequence NSPLSKTPPPQLAHITNTELNKKVEKSTTTPTTTTPPTTTAKPKPTNDDDIFPME. A compositionally biased stretch (low complexity) spans 76–92; that stretch reads TTTPTTTTPPTTTAKPK.

Belongs to the eIF4E-binding protein family.

Functionally, regulates assembly of the eIF4F complex. This chain is Eukaryotic translation initiation factor 4E-1A-binding protein homolog (febA), found in Dictyostelium discoideum (Social amoeba).